The sequence spans 585 residues: Serine/threonine-protein kinase Nek3 (585 aa).

One can recognise a Protein kinase domain in the interval 4 to 258 (YEVLEQIGKG…AAELLKHPHL (255 aa)). ATP contacts are provided by residues 10-18 (IGKGSFGSA) and Lys-33. Asp-129 functions as the Proton acceptor in the catalytic mechanism. 2 disordered regions span residues 354–413 (GNHS…TPVN) and 489–511 (DSSKNHTGDSSDPSILGTDSNPL). 2 stretches are compositionally biased toward polar residues: residues 400-413 (RASQPTRRASTPVN) and 498-511 (SSDPSILGTDSNPL).

Belongs to the protein kinase superfamily. NEK Ser/Thr protein kinase family. NIMA subfamily. As to quaternary structure, interacts with PLIM2B. Expressed in pollen grains.

The enzyme catalyses L-seryl-[protein] + ATP = O-phospho-L-seryl-[protein] + ADP + H(+). It carries out the reaction L-threonyl-[protein] + ATP = O-phospho-L-threonyl-[protein] + ADP + H(+). In terms of biological role, may be involved in plant development processes. May function downstream of DCW11 in retrograde signaling from the mitochondria to the nucleus. Seems to be involved in the mechanism of cytoplasmic male sterility (CMS) occurrence. The protein is Serine/threonine-protein kinase Nek3 of Oryza sativa subsp. japonica (Rice).